Here is a 370-residue protein sequence, read N- to C-terminus: Queuine tRNA-ribosyltransferase (370 aa).

The active-site Proton acceptor is the aspartate 89. Substrate-binding positions include aspartate 89 to phenylalanine 93, aspartate 143, glutamine 187, and glycine 214. The segment at glycine 245 to aspartate 251 is RNA binding. Catalysis depends on aspartate 264, which acts as the Nucleophile. The segment at threonine 269–arginine 273 is RNA binding; important for wobble base 34 recognition. Zn(2+) contacts are provided by cysteine 302, cysteine 304, cysteine 307, and histidine 333.

The protein belongs to the queuine tRNA-ribosyltransferase family. Homodimer. Within each dimer, one monomer is responsible for RNA recognition and catalysis, while the other monomer binds to the replacement base PreQ1. It depends on Zn(2+) as a cofactor.

It carries out the reaction 7-aminomethyl-7-carbaguanine + guanosine(34) in tRNA = 7-aminomethyl-7-carbaguanosine(34) in tRNA + guanine. It functions in the pathway tRNA modification; tRNA-queuosine biosynthesis. Catalyzes the base-exchange of a guanine (G) residue with the queuine precursor 7-aminomethyl-7-deazaguanine (PreQ1) at position 34 (anticodon wobble position) in tRNAs with GU(N) anticodons (tRNA-Asp, -Asn, -His and -Tyr). Catalysis occurs through a double-displacement mechanism. The nucleophile active site attacks the C1' of nucleotide 34 to detach the guanine base from the RNA, forming a covalent enzyme-RNA intermediate. The proton acceptor active site deprotonates the incoming PreQ1, allowing a nucleophilic attack on the C1' of the ribose to form the product. After dissociation, two additional enzymatic reactions on the tRNA convert PreQ1 to queuine (Q), resulting in the hypermodified nucleoside queuosine (7-(((4,5-cis-dihydroxy-2-cyclopenten-1-yl)amino)methyl)-7-deazaguanosine). This is Queuine tRNA-ribosyltransferase from Aromatoleum aromaticum (strain DSM 19018 / LMG 30748 / EbN1) (Azoarcus sp. (strain EbN1)).